A 711-amino-acid chain; its full sequence is Polyribonucleotide nucleotidyltransferase (711 aa).

Positions 486 and 492 each coordinate Mg(2+). The region spanning 553 to 612 (PRIHTIKISPDKIKDVIGKGGSVIRALTEETGTTIEIEDDGTVKIAATDGEKAKFAIRRI) is the KH domain. An S1 motif domain is found at 622-690 (GRIYNGKVTR…RQGRVRLSIK (69 aa)). The disordered stretch occupies residues 690–711 (KEATEQTQPAAAPEAPAAEQGE). The span at 694-711 (EQTQPAAAPEAPAAEQGE) shows a compositional bias: low complexity.

Belongs to the polyribonucleotide nucleotidyltransferase family. Component of the RNA degradosome, which is a multiprotein complex involved in RNA processing and mRNA degradation. Requires Mg(2+) as cofactor.

The protein localises to the cytoplasm. The catalysed reaction is RNA(n+1) + phosphate = RNA(n) + a ribonucleoside 5'-diphosphate. Involved in mRNA degradation. Catalyzes the phosphorolysis of single-stranded polyribonucleotides processively in the 3'- to 5'-direction. The polypeptide is Polyribonucleotide nucleotidyltransferase (Enterobacter sp. (strain 638)).